We begin with the raw amino-acid sequence, 130 residues long: 3-aminoacrylate deaminase RutC (130 aa).

The protein belongs to the RutC family.

It carries out the reaction (Z)-3-aminoacrylate + H2O + H(+) = 3-oxopropanoate + NH4(+). Its function is as follows. Involved in pyrimidine catabolism. Catalyzes the deamination of 3-aminoacrylate to malonic semialdehyde, a reaction that can also occur spontaneously. RutC may facilitate the reaction and modulate the metabolic fitness, rather than catalyzing essential functions. The chain is 3-aminoacrylate deaminase RutC from Klebsiella variicola (strain At-22).